The chain runs to 601 residues: Elongation factor 4 (601 aa).

The 183-residue stretch at 7-189 (RNIRNFSIIA…AIVHRIPPPK (183 aa)) folds into the tr-type G domain. GTP-binding positions include 19 to 24 (DHGKST) and 136 to 139 (NKID).

It belongs to the TRAFAC class translation factor GTPase superfamily. Classic translation factor GTPase family. LepA subfamily.

The protein resides in the cell inner membrane. It catalyses the reaction GTP + H2O = GDP + phosphate + H(+). Its function is as follows. Required for accurate and efficient protein synthesis under certain stress conditions. May act as a fidelity factor of the translation reaction, by catalyzing a one-codon backward translocation of tRNAs on improperly translocated ribosomes. Back-translocation proceeds from a post-translocation (POST) complex to a pre-translocation (PRE) complex, thus giving elongation factor G a second chance to translocate the tRNAs correctly. Binds to ribosomes in a GTP-dependent manner. This chain is Elongation factor 4, found in Xanthomonas campestris pv. campestris (strain ATCC 33913 / DSM 3586 / NCPPB 528 / LMG 568 / P 25).